Here is a 219-residue protein sequence, read N- to C-terminus: ATP-dependent dethiobiotin synthetase BioD (219 aa).

12-17 is a binding site for ATP; that stretch reads GVGKTI. Residue Thr-16 participates in Mg(2+) binding. The active site involves Lys-32. ATP contacts are provided by residues Asp-43 and 96–99; that span reads ETSG. Mg(2+) is bound by residues Asp-43 and Glu-96.

This sequence belongs to the dethiobiotin synthetase family. In terms of assembly, homodimer. Mg(2+) is required as a cofactor.

The protein localises to the cytoplasm. It carries out the reaction (7R,8S)-7,8-diammoniononanoate + CO2 + ATP = (4R,5S)-dethiobiotin + ADP + phosphate + 3 H(+). The protein operates within cofactor biosynthesis; biotin biosynthesis; biotin from 7,8-diaminononanoate: step 1/2. Its function is as follows. Catalyzes a mechanistically unusual reaction, the ATP-dependent insertion of CO2 between the N7 and N8 nitrogen atoms of 7,8-diaminopelargonic acid (DAPA, also called 7,8-diammoniononanoate) to form a ureido ring. The sequence is that of ATP-dependent dethiobiotin synthetase BioD from Chlamydia pneumoniae (Chlamydophila pneumoniae).